The primary structure comprises 271 residues: Formamidopyrimidine-DNA glycosylase (271 aa).

Catalysis depends on Pro-2, which acts as the Schiff-base intermediate with DNA. Glu-3 functions as the Proton donor in the catalytic mechanism. Lys-56 functions as the Proton donor; for beta-elimination activity in the catalytic mechanism. Residues His-89, Arg-107, and Lys-151 each contribute to the DNA site. Residues 236–270 (NVYGRAGLPCRQCGTPVRLLRQGQRSTYFCPHCQR) form an FPG-type zinc finger. Arg-260 serves as the catalytic Proton donor; for delta-elimination activity.

The protein belongs to the FPG family. As to quaternary structure, monomer. Zn(2+) serves as cofactor.

It catalyses the reaction Hydrolysis of DNA containing ring-opened 7-methylguanine residues, releasing 2,6-diamino-4-hydroxy-5-(N-methyl)formamidopyrimidine.. The enzyme catalyses 2'-deoxyribonucleotide-(2'-deoxyribose 5'-phosphate)-2'-deoxyribonucleotide-DNA = a 3'-end 2'-deoxyribonucleotide-(2,3-dehydro-2,3-deoxyribose 5'-phosphate)-DNA + a 5'-end 5'-phospho-2'-deoxyribonucleoside-DNA + H(+). In terms of biological role, involved in base excision repair of DNA damaged by oxidation or by mutagenic agents. Acts as a DNA glycosylase that recognizes and removes damaged bases. Has a preference for oxidized purines, such as 7,8-dihydro-8-oxoguanine (8-oxoG). Has AP (apurinic/apyrimidinic) lyase activity and introduces nicks in the DNA strand. Cleaves the DNA backbone by beta-delta elimination to generate a single-strand break at the site of the removed base with both 3'- and 5'-phosphates. The polypeptide is Formamidopyrimidine-DNA glycosylase (Acidovorax sp. (strain JS42)).